The following is a 176-amino-acid chain: Japanin-like-RS (176 aa).

An N-terminal signal peptide occupies residues 1–24 (MKVLLCLVCSFYIIVSSITTMTTG). 2 disulfides stabilise this stretch: C52–C174 and C138–C162. Residue N155 is glycosylated (N-linked (GlcNAc...) asparagine).

This sequence belongs to the calycin superfamily. Lipocalin family. In terms of assembly, homodimer; non-disulfide-linked. Each monomer accommodates one molecule of cholesterol in a pocket. Expressed in salivary glands.

Its subcellular location is the secreted. Its function is as follows. Salivary tick protein that modulates host immune response. This protein blocks dendritic cell (DC) differentiation from monocytes. In addition, it inhibits up-regulation of costimulatory molecules and pro-inflammatory cytokines in response to stimuli and promotes up-regulation of co-inhibitory molecules and the anti-inflammatory cytokine interleukin-10. It has a pocket to accomodate cholesterol, which may have immune-modulatory roles, either directly or through interactions with the host gut microbiota. This Rhipicephalus sanguineus (Brown dog tick) protein is Japanin-like-RS.